We begin with the raw amino-acid sequence, 1550 residues long: Adhesion G protein-coupled receptor L3 (1550 aa).

An N-terminal signal peptide occupies residues 1 to 19 (MCPPQLFILMMLLAPVVHG). The Extracellular segment spans residues 20-948 (GKHNERHPAL…VHDLLLDVIT (929 aa)). The interval 34–80 (RHAEHSPGGPLPPRHLLQQPAAERSTAHRGQGPRGTARGVRGPGAPG) is disordered. Positions 103–192 (SCESYPIELR…KYLEVQYECV (90 aa)) constitute an SUEL-type lectin domain. Intrachain disulfides connect C104/C134, C113/C191, C146/C178, C159/C165, and C203/C385. The N-linked (GlcNAc...) asparagine glycan is linked to N161. Residues 202–461 (LCPGLLKGVY…VVKYSLDFGP (260 aa)) enclose the Olfactomedin-like domain. Residues 317-347 (YHDTSPYRWGGKSDIDLAVDENGLWVIYATE) form an interaction with FLRT3 region. Ca(2+)-binding residues include D332, N380, A381, and V435. Residues 518 to 538 (NLGRSTTPSLPGRRNRSTSTP) form a disordered region. N-linked (GlcNAc...) asparagine glycosylation is found at N532, N616, N839, N884, and N910. A GAIN-B domain is found at 755–934 (DIVRENTDNI…AVLMAHVEVK (180 aa)). Cystine bridges form between C885-C916 and C904-C918. The GPS stretch occupies residues 885-934 (CSFWSYSKRTMTGYWSTQGCRLLTTNKTHTTCSCNHLTNFAVLMAHVEVK). The tract at residues 922–938 (TNFAVLMAHVEVKHSDA) is stachel. A helical membrane pass occupies residues 949–969 (WVGILLSLVCLLICIFTFCFF). Residues 970-977 (RGLQSDRN) are Cytoplasmic-facing. A helical membrane pass occupies residues 978–998 (TIHKNLCISLFVAELLFLIGI). N999 carries N-linked (GlcNAc...) asparagine glycosylation. The Extracellular segment spans residues 999 to 1006 (NRTDQPIA). A helical membrane pass occupies residues 1007–1027 (CAVFAALLHFFFLAAFTWMFL). Residues 1028–1048 (EGVQLYIMLVEVFESEHSRRK) lie on the Cytoplasmic side of the membrane. A helical transmembrane segment spans residues 1049–1069 (YFYLVGYGMPALIVAVSAAVD). Over 1070-1087 (YRSYGTDKVCWLRLDTYF) the chain is Extracellular. Residues 1088 to 1108 (IWSFIGPATLIIMLNVIFLGI) traverse the membrane as a helical segment. At 1109-1141 (ALYKMFHHTAILKPESGCLDNINYEDNRPFIKS) the chain is on the cytoplasmic side. The chain crosses the membrane as a helical span at residues 1142 to 1162 (WVIGAIALLCLLGLTWAFGLM). The Extracellular portion of the chain corresponds to 1163-1168 (YINEST). The N-linked (GlcNAc...) asparagine glycan is linked to N1165. The helical transmembrane segment at 1169-1189 (VIMAYLFTIFNSLQGMFIFIF) threads the bilayer. Topologically, residues 1190-1550 (HCVLQKKVRK…KGPAHLVTSL (361 aa)) are cytoplasmic. A disordered region spans residues 1213-1236 (KSTESSIGSGKTSGSRTPGRYSTG). A Phosphoserine modification is found at S1253. Disordered regions lie at residues 1410-1435 (LLPPRVYSTDNHQPHHYSRRRLPQDH) and 1528-1550 (PPNKDGASPEGTSKGPAHLVTSL). At S1535 the chain carries Phosphoserine. Residues 1545 to 1550 (HLVTSL) carry the PDZ-binding motif.

It belongs to the G-protein coupled receptor 2 family. LN-TM7 subfamily. As to quaternary structure, heterodimer of 2 chains generated by proteolytic processing; the large extracellular N-terminal fragment and the membrane-bound C-terminal fragment predominantly remain associated and non-covalently linked. Interacts (via olfactomedin-like domain) with FLRT1 (via extracellular domain). Interacts (via olfactomedin-like domain) with FLRT2 (via extracellular domain). Interacts (via olfactomedin-like domain) with FLRT3 (via extracellular domain); the interaction is direct. Interacts (via extracellular domain) with TENM1. Interacts (via extracellular domain) with TENM2. Interacts (via extracellular domain) with TENM3. Identified in a complex with FLRT3 and UNC5B; does not interact with UNC5B by itself. Identified in a complex with FLRT3 and UNC5D; does not interact with UNC5D by itself. In terms of assembly, interacts (via PDZ-binding motif) with SHANK3. Interacts (via PDZ-binding motif) with DLG4. In terms of processing, autoproteolytically processed at the GPS region of the GAIN-B domain; this cleavage modulates receptor activity. Predominantly expressed in brain, followed by heart, placenta, pancreas, kidney and testis.

Its subcellular location is the cell membrane. It localises to the postsynaptic cell membrane. The protein resides in the cell projection. The protein localises to the axon. It is found in the cell junction. Its activity is regulated as follows. Forms a heterodimer of 2 chains generated by proteolytic processing that remain associated through non-covalent interactions mediated by the GAIN-B domain. In the inactivated receptor, the Stachel sequence (also named stalk) is embedded in the GAIN-B domain, where it adopts a beta-strand conformation. On activation, the Stachel moves into the 7 transmembrane region and adopts a twisted hook-shaped configuration that forms contacts within the receptor, leading to coupling of a G-alpha protein, which activates signaling. The cleaved GAIN-B and N-terminal domains can then dissociate from the rest of the receptor. Functionally, orphan adhesion G-protein coupled receptor (aGPCR), which mediates synapse specificity. Ligand binding causes a conformation change that triggers signaling via guanine nucleotide-binding proteins (G proteins) and modulates the activity of downstream effectors. ADGRL3 is coupled with different classes of G alpha proteins, such as G(12)/G(13), G(s), G(i) or G(q), depending on the context. Coupling to G(12)/G(13) G proteins, which mediates the activation Rho small GTPases is the most efficient. Following G-protein coupled receptor activation, associates with cell adhesion molecules that are expressed at the surface of adjacent cells to direct synapse specificity. Specifically mediates the establishment of Schaffer-collateral synapses formed by CA3-region axons on CA1-region pyramidal neurons in the hippocampus. Localizes to postsynaptic spines in excitatory synapses in the S.oriens and S.radiatum and interacts with presynaptic cell adhesion molecules FLRT3 and TENM2, promoting synapse formation. Plays a role in the development of glutamatergic synapses in the cortex. Important in determining the connectivity rates between the principal neurons in the cortex. Its function is as follows. Orphan adhesion G-protein coupled receptor (aGPCR), which mediates synapse specificity. Ligand binding causes a conformation change that triggers signaling via guanine nucleotide-binding proteins (G proteins) and modulates the activity of downstream effectors, such as adenylate cyclase. Isoform 1 is specifically coupled to G(s) G proteins and mediates activation of adenylate cyclase activity. Following G-protein coupled receptor activation, undergoes liquid-liquid phase transition, associates with (1) cell adhesion molecules that are expressed at the surface of adjacent cells, as well as (2) PDZ-containing proteins, such as SHANK3 and DLG4, in the cytoplasm to direct synapse formation. This is Adhesion G protein-coupled receptor L3 from Rattus norvegicus (Rat).